Consider the following 195-residue polypeptide: Probable DNA-directed RNA polymerase subunit delta (195 aa).

Residues Phe-14 to Trp-81 form the HTH HARE-type domain. Acidic residues-rich tracts occupy residues Asp-120–Ile-172 and Gly-181–Lys-195. Residues Asp-120–Lys-195 are disordered.

It belongs to the RpoE family. As to quaternary structure, RNAP is composed of a core of 2 alpha, a beta and a beta' subunits. The core is associated with a delta subunit and one of several sigma factors.

Participates in both the initiation and recycling phases of transcription. In the presence of the delta subunit, RNAP displays an increased specificity of transcription, a decreased affinity for nucleic acids, and an increased efficiency of RNA synthesis because of enhanced recycling. This Leuconostoc mesenteroides subsp. mesenteroides (strain ATCC 8293 / DSM 20343 / BCRC 11652 / CCM 1803 / JCM 6124 / NCDO 523 / NBRC 100496 / NCIMB 8023 / NCTC 12954 / NRRL B-1118 / 37Y) protein is Probable DNA-directed RNA polymerase subunit delta.